A 376-amino-acid chain; its full sequence is Cell adhesion molecule CEACAM18 (376 aa).

The signal sequence occupies residues 1 to 30 (MDFSRPSFSPWRWLTLVASLLTCGICQASG). Topologically, residues 31-330 (QIFISPDSLL…PLPTVNRELY (300 aa)) are extracellular. 3 N-linked (GlcNAc...) asparagine glycosylation sites follow: asparagine 69, asparagine 95, and asparagine 110. The Ig-like C2-type domain maps to 229-314 (PDYVSLWTQP…TQLTFYRDVT (86 aa)). Cysteine 257 and cysteine 298 are joined by a disulfide. Residues 331 to 351 (IPGPLVIFLILLTSLGGAFVC) form a helical membrane-spanning segment. At 352–376 (RVLVYSLFQSCSRGKTCHKCPWQTN) the chain is on the cytoplasmic side.

It belongs to the immunoglobulin superfamily. CEA family. Mostly expressed in the small and large intestine and at lower levels also in other organs.

The protein localises to the membrane. This chain is Cell adhesion molecule CEACAM18, found in Mus musculus (Mouse).